Consider the following 256-residue polypeptide: uncharacterized protein (256 aa).

Transmembrane regions (helical) follow at residues 155-175 (ITGM…GLWL) and 203-223 (ITTT…YLLI).

It localises to the cell membrane. This is an uncharacterized protein from Mycobacterium bovis (strain ATCC BAA-935 / AF2122/97).